The sequence spans 1077 residues: Adenylate cyclase type 4 (1077 aa).

Residues 1–28 lie on the Cytoplasmic side of the membrane; that stretch reads MARLFSPRPPPSEDLFYETYYSLSQQYP. Helical transmembrane passes span 29-50, 61-80, 94-117, 120-138, 141-162, and 170-190; these read LLLLLLGIVLCALAALLAVAWA, FLTTVLCALGGFSLLLGLAS, GLVWVALLALGHAFLFTGGVVSAW, VSYFLFVIFTAYAMLPLGM, AAVAGLASSLSHLLVLGLYLGP, and LLPQLAANAVLFLCGNVAGVY. The Cytoplasmic portion of the chain corresponds to 191 to 585; that stretch reads HKALMERALR…YRLSAIPAFK (395 aa). Mg(2+) is bound by residues D278, I279, and D322. ATP contacts are provided by residues 278-283, 320-322, and R366; these read DIVGFT and LGD. Position 520 is a phosphoserine (S520). Position 536 is a phosphothreonine (T536). The next 3 helical transmembrane spans lie at 586–607, 611–633, and 664–687; these read YYEACTFLVFLSNFIIQMLVTN, ALAITYSITFLLFLLILFVCFSE, and IALGTATILLVFAMAITSLFFFPT. The Extracellular portion of the chain corresponds to 688-714; sequence SSDCPFQAPNVSSMISNLSWELPGSLP. N-linked (GlcNAc...) asparagine glycosylation is found at N697 and N704. 3 consecutive transmembrane segments (helical) span residues 715 to 736, 744 to 764, and 791 to 807; these read LISVPYSMHCCTLGFLSCSLFL, LLLLLLWLAASCSLFLHSHAW, and MGAISFFIFFFTLLVLA. Over 808 to 1077 the chain is Cytoplasmic; the sequence is RQNEYYCRLD…RTGPPSATLG (270 aa). ATP contacts are provided by residues K925, 1005–1007, 1012–1016, and K1052; these read DIW and NVASR.

It belongs to the adenylyl cyclase class-4/guanylyl cyclase family. It depends on Mg(2+) as a cofactor. Mn(2+) is required as a cofactor. In terms of tissue distribution, detected in the zona glomerulosa and the zona fasciculata in the adrenal gland (at protein level).

Its subcellular location is the cell membrane. The protein resides in the cytoplasm. The catalysed reaction is ATP = 3',5'-cyclic AMP + diphosphate. Activated by forskolin. Insensitive to calcium/calmodulin. Stimulated by GNAS and by the G-protein beta and gamma subunit complex. Catalyzes the formation of the signaling molecule cAMP in response to G-protein signaling. The chain is Adenylate cyclase type 4 (ADCY4) from Homo sapiens (Human).